We begin with the raw amino-acid sequence, 400 residues long: Aminomethyltransferase, mitochondrial (400 aa).

Substrate-binding residues include glutamate 221, arginine 250, and tyrosine 397.

It belongs to the GcvT family. As to quaternary structure, component of the glycine decarboxylase complex (GDC), which is composed of four proteins: P, T, L and H.

It localises to the mitochondrion. It carries out the reaction N(6)-[(R)-S(8)-aminomethyldihydrolipoyl]-L-lysyl-[protein] + (6S)-5,6,7,8-tetrahydrofolate = N(6)-[(R)-dihydrolipoyl]-L-lysyl-[protein] + (6R)-5,10-methylene-5,6,7,8-tetrahydrofolate + NH4(+). Functionally, the glycine cleavage system (glycine decarboxylase complex) catalyzes the degradation of glycine. The protein is Aminomethyltransferase, mitochondrial (GCV1) of Saccharomyces cerevisiae (strain ATCC 204508 / S288c) (Baker's yeast).